Reading from the N-terminus, the 824-residue chain is Protein-glutamine gamma-glutamyltransferase K (824 aa).

The segment covering Met1–Arg10 has biased composition (basic and acidic residues). Disordered stretches follow at residues Met1–Ser44 and Asp61–Asp110. Thr20 carries the post-translational modification Phosphothreonine. Phosphoserine is present on residues Ser22, Ser70, Ser92, Ser100, and Ser103. Residues Pro65–Ser76 are compositionally biased toward low complexity. A compositionally biased stretch (basic and acidic residues) spans Gly85–Ser100. Active-site residues include Cys385, His444, and Asp467. Ca(2+)-binding residues include Asn507, Asp509, Glu556, and Glu561. Positions Arg801 to Ala824 are disordered. Ser812 is modified (phosphoserine).

It belongs to the transglutaminase superfamily. Transglutaminase family. In terms of assembly, interacts with PLAAT4. Requires Ca(2+) as cofactor. Palmitoylated. Post-translationally, the membrane anchorage region possesses a cluster of five cysteines within which fatty acid(s) may become thioester-linked. It is subject to phorbol ester-stimulated phosphorylation and is hypersensitive to proteolysis, which releases the enzyme in a soluble form. In terms of processing, tyrosine-phosphorylated.

The protein resides in the membrane. It carries out the reaction L-glutaminyl-[protein] + L-lysyl-[protein] = [protein]-L-lysyl-N(6)-5-L-glutamyl-[protein] + NH4(+). Its function is as follows. Catalyzes the cross-linking of proteins and the conjugation of polyamines to proteins. Responsible for cross-linking epidermal proteins during formation of the stratum corneum. Involved in cell proliferation. The sequence is that of Protein-glutamine gamma-glutamyltransferase K (Tgm1) from Rattus norvegicus (Rat).